Reading from the N-terminus, the 35-residue chain is MSDIN-like toxin proprotein 8 (35 aa).

Positions 1–10 (MSDINATRLP) are excised as a propeptide. Residues 11–18 (FVFVASPP) constitute a cross-link (cyclopeptide (Phe-Pro)). Residues 19-35 (CVGDDIAMVLTRGENLC) constitute a propeptide that is removed on maturation.

This sequence belongs to the MSDIN fungal toxin family. Processed by the macrocyclase-peptidase enzyme POPB to yield a toxic cyclic octapeptide. POPB first removes 10 residues from the N-terminus. Conformational trapping of the remaining peptide forces the enzyme to release this intermediate rather than proceed to macrocyclization. The enzyme rebinds the remaining peptide in a different conformation and catalyzes macrocyclization of the N-terminal 8 residues. As to expression, expressed in basidiocarps.

In terms of biological role, probable toxin that belongs to the MSDIN-like toxin family responsible for a large number of food poisoning cases and deaths. The sequence is that of MSDIN-like toxin proprotein 8 from Amanita exitialis (Guangzhou destroying angel).